Reading from the N-terminus, the 451-residue chain is Trimethylamine monooxygenase (451 aa).

The FAD site is built by serine 12, glutamate 37, glutamine 39, leucine 45, tryptophan 46, and histidine 62. 2 residues coordinate NADP(+): tryptophan 70 and asparagine 72. FAD is bound by residues asparagine 72 and valine 125. 4 residues coordinate NADP(+): serine 204, serine 205, serine 207, and arginine 228. Glutamine 317 and threonine 320 together coordinate FAD. NADP(+) is bound at residue arginine 411.

This sequence belongs to the FMO family. The cofactor is FAD.

It carries out the reaction trimethylamine + NADPH + O2 = trimethylamine N-oxide + NADP(+) + H2O. Its function is as follows. Catalyzes the oxidation of trimethylamine (TMA) to produce trimethylamine N-oxide (TMAO). In vitro, has a broad substrate specificity, oxidizing many nitrogen- and sulfur-containing compounds, including dimethylamine (DMA), dimethylsulfide (DMS), dimethylsulfoxide (DMSO), cysteamine, methimazole and dimethylaniline. The sequence is that of Trimethylamine monooxygenase from Methylocella silvestris (strain DSM 15510 / CIP 108128 / LMG 27833 / NCIMB 13906 / BL2).